The following is a 372-amino-acid chain: Adaptive-response sensory kinase SasA (372 aa).

The region spanning 147 to 360 (MVAHELRTPL…CFHFTVPVWQ (214 aa)) is the Histidine kinase domain. Position 150 is a phosphohistidine; by autocatalysis (His-150).

Homooligomerizes. Interacts with KaiC. Participates in the KaiBC complex, whose core is composed of a KaiC homohexamer and 6 KaiB.

The enzyme catalyses ATP + protein L-histidine = ADP + protein N-phospho-L-histidine.. Functionally, member of the two-component regulatory system SasA/RpaA involved in genome-wide circadian gene expression. One of several clock output pathways. Participates in the Kai clock protein complex, the main circadian regulator in cyanobacteria, via its interaction with KaiC. KaiC enhances the autophosphorylation activity of SasA, which then transfers its phosphate group to RpaA to activate it. In addition to its output function, recruits fold-shifted KaiB (KaiB(fs)) to KaiC to cooperatively form the KaiB(6):KaiC(6) complex (independent of SasA kinase activity). Required for robustness of the circadian rhythm of gene expression and is involved in clock output, also required for adaptation to light/dark cycles. In Prochlorococcus marinus (strain AS9601), this protein is Adaptive-response sensory kinase SasA.